Reading from the N-terminus, the 468-residue chain is 23S rRNA (uracil(1939)-C(5))-methyltransferase RlmD (468 aa).

One can recognise a TRAM domain in the interval 12 to 70 (SKQLSPKLSLNVTQLDHLGAGMAQHQGKVVFIPQALPGERVSVQLTDQKKSFAKAKLIK). [4Fe-4S] cluster contacts are provided by Cys-83, Cys-89, Cys-92, and Cys-174. S-adenosyl-L-methionine contacts are provided by Gln-296, Phe-325, Asn-330, Glu-351, Asp-378, and Asp-398. Cys-424 functions as the Nucleophile in the catalytic mechanism.

The protein belongs to the class I-like SAM-binding methyltransferase superfamily. RNA M5U methyltransferase family. RlmD subfamily.

The catalysed reaction is uridine(1939) in 23S rRNA + S-adenosyl-L-methionine = 5-methyluridine(1939) in 23S rRNA + S-adenosyl-L-homocysteine + H(+). Functionally, catalyzes the formation of 5-methyl-uridine at position 1939 (m5U1939) in 23S rRNA. This Shewanella denitrificans (strain OS217 / ATCC BAA-1090 / DSM 15013) protein is 23S rRNA (uracil(1939)-C(5))-methyltransferase RlmD.